The primary structure comprises 420 residues: Tyrosine--tRNA ligase (420 aa).

L-tyrosine is bound at residue tyrosine 33. The 'HIGH' region motif lies at 38 to 47 (PTGDSLHAGH). L-tyrosine is bound by residues tyrosine 167 and glutamine 171. Residues 227-231 (KFGKS) carry the 'KMSKS' region motif. Residue lysine 230 coordinates ATP. The 67-residue stretch at 352–418 (PTIIDLLIGA…GKKNFAGVKY (67 aa)) folds into the S4 RNA-binding domain.

This sequence belongs to the class-I aminoacyl-tRNA synthetase family. TyrS type 1 subfamily. Homodimer.

It localises to the cytoplasm. The catalysed reaction is tRNA(Tyr) + L-tyrosine + ATP = L-tyrosyl-tRNA(Tyr) + AMP + diphosphate + H(+). Catalyzes the attachment of tyrosine to tRNA(Tyr) in a two-step reaction: tyrosine is first activated by ATP to form Tyr-AMP and then transferred to the acceptor end of tRNA(Tyr). The chain is Tyrosine--tRNA ligase from Corynebacterium diphtheriae (strain ATCC 700971 / NCTC 13129 / Biotype gravis).